The following is a 182-amino-acid chain: Probable RNA 2'-phosphotransferase (182 aa).

The protein belongs to the KptA/TPT1 family.

Functionally, removes the 2'-phosphate from RNA via an intermediate in which the phosphate is ADP-ribosylated by NAD followed by a presumed transesterification to release the RNA and generate ADP-ribose 1''-2''-cyclic phosphate (APPR&gt;P). May function as an ADP-ribosylase. In Pseudomonas fluorescens (strain ATCC BAA-477 / NRRL B-23932 / Pf-5), this protein is Probable RNA 2'-phosphotransferase.